Consider the following 70-residue polypeptide: Large ribosomal subunit protein bL31 (70 aa).

The residue at position 8 (Lys8) is an N6-acetyllysine. The Zn(2+) site is built by Cys16, Cys18, Cys37, and Cys40.

The protein belongs to the bacterial ribosomal protein bL31 family. Type A subfamily. Part of the 50S ribosomal subunit. Requires Zn(2+) as cofactor.

Its function is as follows. Binds the 23S rRNA. The chain is Large ribosomal subunit protein bL31 from Escherichia coli O6:K15:H31 (strain 536 / UPEC).